The sequence spans 65 residues: Large ribosomal subunit protein bL32 (65 aa).

It belongs to the bacterial ribosomal protein bL32 family.

In Phytoplasma australiense, this protein is Large ribosomal subunit protein bL32.